Consider the following 304-residue polypeptide: Methionyl-tRNA formyltransferase (304 aa).

111–114 (SLLP) provides a ligand contact to (6S)-5,6,7,8-tetrahydrofolate.

The protein belongs to the Fmt family.

The catalysed reaction is L-methionyl-tRNA(fMet) + (6R)-10-formyltetrahydrofolate = N-formyl-L-methionyl-tRNA(fMet) + (6S)-5,6,7,8-tetrahydrofolate + H(+). Attaches a formyl group to the free amino group of methionyl-tRNA(fMet). The formyl group appears to play a dual role in the initiator identity of N-formylmethionyl-tRNA by promoting its recognition by IF2 and preventing the misappropriation of this tRNA by the elongation apparatus. The sequence is that of Methionyl-tRNA formyltransferase from Campylobacter fetus subsp. fetus (strain 82-40).